The chain runs to 396 residues: Phosphoglycerate kinase (396 aa).

Residues D21–N23, R36, H59–R62, R118, and R151 contribute to the substrate site. ATP contacts are provided by residues K201, E323, and G353 to T356.

Belongs to the phosphoglycerate kinase family. Monomer.

The protein resides in the cytoplasm. The catalysed reaction is (2R)-3-phosphoglycerate + ATP = (2R)-3-phospho-glyceroyl phosphate + ADP. It participates in carbohydrate degradation; glycolysis; pyruvate from D-glyceraldehyde 3-phosphate: step 2/5. This is Phosphoglycerate kinase from Caulobacter sp. (strain K31).